Here is a 103-residue protein sequence, read N- to C-terminus: Histone H4 (103 aa).

Gly residues predominate over residues 1 to 14 (MSGRGKGGKGLGKG). The disordered stretch occupies residues 1-20 (MSGRGKGGKGLGKGGAKRHR). N6-acetyl-N6-methyllysine; alternate is present on Lys-6. N6-methyllysine; alternate occurs at positions 6, 9, and 13. Lys-13 carries the N6-acetyl-N6-methyllysine; alternate modification. A DNA-binding region spans residues 17–21 (KRHRK). An N6-glutaryllysine modification is found at Lys-92.

The protein belongs to the histone H4 family. The nucleosome is a histone octamer containing two molecules each of H2A, H2B, H3 and H4 assembled in one H3-H4 heterotetramer and two H2A-H2B heterodimers. The octamer wraps approximately 147 bp of DNA. In terms of processing, glutarylation at Lys-92 (H4K91glu) destabilizes nucleosomes by promoting dissociation of the H2A-H2B dimers from nucleosomes.

The protein localises to the nucleus. It is found in the chromosome. In terms of biological role, core component of nucleosome. Nucleosomes wrap and compact DNA into chromatin, limiting DNA accessibility to the cellular machineries which require DNA as a template. Histones thereby play a central role in transcription regulation, DNA repair, DNA replication and chromosomal stability. DNA accessibility is regulated via a complex set of post-translational modifications of histones, also called histone code, and nucleosome remodeling. In Mycosarcoma maydis (Corn smut fungus), this protein is Histone H4 (HHF1).